Consider the following 183-residue polypeptide: Large ribosomal subunit protein bL32m (183 aa).

The Zn(2+) site is built by Cys99, Cys102, Cys112, and Cys115.

It belongs to the bacterial ribosomal protein bL32 family. Component of the mitochondrial large ribosomal subunit (mt-LSU).

Its subcellular location is the mitochondrion. Component of the mitochondrial large ribosomal subunit (mt-LSU). The mitochondrial ribosome (mitoribosome) is a large ribonucleoprotein complex responsible for the synthesis of proteins inside mitochondria. The sequence is that of Large ribosomal subunit protein bL32m (mrpl-32) from Caenorhabditis elegans.